The sequence spans 433 residues: ATP-dependent protease ATPase subunit HslU (433 aa).

Residues I18, 60–65 (GVGKTE), D246, E311, and R383 contribute to the ATP site.

Belongs to the ClpX chaperone family. HslU subfamily. In terms of assembly, a double ring-shaped homohexamer of HslV is capped on each side by a ring-shaped HslU homohexamer. The assembly of the HslU/HslV complex is dependent on binding of ATP.

The protein resides in the cytoplasm. Its function is as follows. ATPase subunit of a proteasome-like degradation complex; this subunit has chaperone activity. The binding of ATP and its subsequent hydrolysis by HslU are essential for unfolding of protein substrates subsequently hydrolyzed by HslV. HslU recognizes the N-terminal part of its protein substrates and unfolds these before they are guided to HslV for hydrolysis. The protein is ATP-dependent protease ATPase subunit HslU of Cereibacter sphaeroides (strain ATCC 17029 / ATH 2.4.9) (Rhodobacter sphaeroides).